The primary structure comprises 454 residues: Chromosomal replication initiator protein DnaA (454 aa).

A domain I, interacts with DnaA modulators region spans residues 1–71 (MTKEQWGQLQ…HEVRQEDPAV (71 aa)). The segment at 71 to 112 (VRRLRFAVPSHVNATTKPARPAQATAPRAPAEKTPRSTLSTA) is domain II. The disordered stretch occupies residues 82–108 (VNATTKPARPAQATAPRAPAEKTPRST). Positions 84–99 (ATTKPARPAQATAPRA) are enriched in low complexity. The interval 113-334 (PLDARFTFDN…GALTRLCAFA (222 aa)) is domain III, AAA+ region. ATP is bound by residues Gly-157, Gly-159, Lys-160, and Thr-161. The tract at residues 335–454 (SLVGREIDME…LELLRRALEE (120 aa)) is domain IV, binds dsDNA.

The protein belongs to the DnaA family. As to quaternary structure, oligomerizes as a right-handed, spiral filament on DNA at oriC.

It localises to the cytoplasm. Plays an essential role in the initiation and regulation of chromosomal replication. ATP-DnaA binds to the origin of replication (oriC) to initiate formation of the DNA replication initiation complex once per cell cycle. Binds the DnaA box (a 9 base pair repeat at the origin) and separates the double-stranded (ds)DNA. Forms a right-handed helical filament on oriC DNA; dsDNA binds to the exterior of the filament while single-stranded (ss)DNA is stabiized in the filament's interior. The ATP-DnaA-oriC complex binds and stabilizes one strand of the AT-rich DNA unwinding element (DUE), permitting loading of DNA polymerase. After initiation quickly degrades to an ADP-DnaA complex that is not apt for DNA replication. Binds acidic phospholipids. This chain is Chromosomal replication initiator protein DnaA, found in Roseobacter denitrificans (strain ATCC 33942 / OCh 114) (Erythrobacter sp. (strain OCh 114)).